An 89-amino-acid polypeptide reads, in one-letter code: Probable Fe(2+)-trafficking protein (89 aa).

The protein belongs to the Fe(2+)-trafficking protein family.

Could be a mediator in iron transactions between iron acquisition and iron-requiring processes, such as synthesis and/or repair of Fe-S clusters in biosynthetic enzymes. This is Probable Fe(2+)-trafficking protein from Acinetobacter baumannii (strain SDF).